Here is a 37-residue protein sequence, read N- to C-terminus: Large ribosomal subunit protein bL36 (37 aa).

The protein belongs to the bacterial ribosomal protein bL36 family.

The polypeptide is Large ribosomal subunit protein bL36 (Rhodococcus erythropolis (strain PR4 / NBRC 100887)).